Reading from the N-terminus, the 690-residue chain is F-box/LRR-repeat protein 5 (690 aa).

The tract at residues 1–159 is hemerythrin-like; sequence MAPFPDEVDV…IKKKVIAQHC (159 aa). Histidine 15, histidine 57, glutamate 58, glutamate 61, histidine 80, histidine 126, and glutamate 130 together coordinate Fe(3+). The F-box domain occupies 202–248; the sequence is STGITHLPPEVMLSIFSYLNPQELCRCSQVSTKWSQLAKTGSLWKHL. 7 LRR repeats span residues 340-364, 365-392, 393-418, 478-507, 575-606, 607-634, and 635-660; these read SSAV…LDLT, QTDI…DLSG, CEKI…QSGF, VWML…CVME, TTLP…SLSG, CYQI…NLSG, and CLTV…YFYY. Residues cysteine 661, cysteine 675, cysteine 685, and cysteine 686 each contribute to the [2Fe-2S] cluster site.

In terms of assembly, part of a SCF (SKP1-cullin-F-box) protein ligase complex. Interacts with ACO1/IRP1, IREB2/IRP2; the interaction depends on the [2Fe-2S] cluster. Interacts with DCTN1/p150-glued. It depends on [2Fe-2S] cluster as a cofactor. Post-translationally, polybiquitinated upon iron and oxygen depletion, leading to its degradation by the proteasome. Ubiquitination is regulated by the hemerythrin-like region that acts as an oxygen and iron sensor. Undergoes constitutive ubiquitin-dependent degradation at the steady state by HERC2. In terms of tissue distribution, ubiquitously expressed. Highly expressed in early embryogenesis with expression decreasing as the embryo progresses through development (E11 and E15).

The protein resides in the cytoplasm. It localises to the perinuclear region. It is found in the nucleus. It functions in the pathway protein modification; protein ubiquitination. Its activity is regulated as follows. An iron-sulfur cluster promotes IRP2 polyubiquitination and degradation in response to both iron and oxygen concentrations. Its function is as follows. Component of some SCF (SKP1-cullin-F-box) protein ligase complex that plays a central role in iron homeostasis by promoting the ubiquitination and subsequent degradation of IREB2/IRP2. The C-terminal domain of FBXL5 contains a redox-sensitive [2Fe-2S] cluster that, upon oxidation, promotes binding to IRP2 to effect its oxygen-dependent degradation. Under iron deficiency conditions, the N-terminal hemerythrin-like (Hr) region, which contains a diiron metal center, cannot bind iron and undergoes conformational changes that destabilize the FBXL5 protein and cause its ubiquitination and degradation. When intracellular iron levels start rising, the Hr region is stabilized. Additional increases in iron levels facilitate the assembly and incorporation of a redox active [2Fe-2S] cluster in the C-terminal domain. Only when oxygen level is high enough to maintain the cluster in its oxidized state can FBXL5 recruit IRP2 as a substrate for polyubiquination and degradation. Promotes ubiquitination and subsequent degradation of the dynactin complex component DCTN1. Within the nucleus, promotes the ubiquitination of SNAI1; preventing its interaction with DNA and promoting its degradation. Negatively regulates DNA damage response by mediating the ubiquitin-proteasome degradation of the DNA repair protein NABP2. The sequence is that of F-box/LRR-repeat protein 5 (Fbxl5) from Mus musculus (Mouse).